We begin with the raw amino-acid sequence, 278 residues long: Gamma carbonic anhydrase 2, mitochondrial (278 aa).

The N-terminal 43 residues, Met1 to Arg43, are a transit peptide targeting the mitochondrion. Substrate contacts are provided by residues Arg86–Asp88 and Gln101–Asp102. The Zn(2+) site is built by His107, His130, and His135. A substrate-binding site is contributed by Asn209.

The protein belongs to the gamma-class carbonic anhydrase family. Homotrimer. Component of the mitochondrial oxidoreductase respiratory chain complex I; element of the extra matrix-exposed domain, which is attached to the membrane arm of this complex. Interacts with GAMMACAL1 and GAMMACAL2. It depends on Zn(2+) as a cofactor. Constitutively expressed in roots and leaves, with higher levels in flowers, particularly in tapetal tissue of anthers, inflorescence (IM) and floral meristems (FM).

The protein resides in the mitochondrion membrane. In terms of biological role, enzyme involved in the catabolism of H(2)CO(3) but that does not mediates the reversible hydration of carbon dioxide. Mediates complex I assembly in mitochondria and respiration. Binds HCO(3)-. Required for male fertility during anther development and dehiscence to regulate the secondary thickenings of the endothecial cell wall, probably by modulating H(2)O(2)-dependent lignin polymerization. In Arabidopsis thaliana (Mouse-ear cress), this protein is Gamma carbonic anhydrase 2, mitochondrial (GAMMACA2).